Here is a 272-residue protein sequence, read N- to C-terminus: Thiazole synthase (272 aa).

The active-site Schiff-base intermediate with DXP is the Lys-111. 1-deoxy-D-xylulose 5-phosphate contacts are provided by residues Gly-172, 198-199 (AG), and 220-221 (NS). Residues 249 to 272 (SGRLPRRDQASASSPTTGLVQSPQ) form a disordered region. Polar residues predominate over residues 258 to 272 (ASASSPTTGLVQSPQ).

This sequence belongs to the ThiG family. Homotetramer. Forms heterodimers with either ThiH or ThiS.

The protein localises to the cytoplasm. The enzyme catalyses [ThiS sulfur-carrier protein]-C-terminal-Gly-aminoethanethioate + 2-iminoacetate + 1-deoxy-D-xylulose 5-phosphate = [ThiS sulfur-carrier protein]-C-terminal Gly-Gly + 2-[(2R,5Z)-2-carboxy-4-methylthiazol-5(2H)-ylidene]ethyl phosphate + 2 H2O + H(+). It participates in cofactor biosynthesis; thiamine diphosphate biosynthesis. Catalyzes the rearrangement of 1-deoxy-D-xylulose 5-phosphate (DXP) to produce the thiazole phosphate moiety of thiamine. Sulfur is provided by the thiocarboxylate moiety of the carrier protein ThiS. In vitro, sulfur can be provided by H(2)S. This Synechococcus sp. (strain CC9605) protein is Thiazole synthase.